The chain runs to 166 residues: Phosphopantetheine adenylyltransferase (166 aa).

Serine 9 contacts substrate. ATP-binding positions include 9-10 (SF) and histidine 17. Lysine 41, threonine 74, and arginine 88 together coordinate substrate. ATP contacts are provided by residues 89–91 (GLR), glutamate 99, and 124–130 (DSFISSS).

This sequence belongs to the bacterial CoaD family. As to quaternary structure, homohexamer. Mg(2+) serves as cofactor.

Its subcellular location is the cytoplasm. It catalyses the reaction (R)-4'-phosphopantetheine + ATP + H(+) = 3'-dephospho-CoA + diphosphate. The protein operates within cofactor biosynthesis; coenzyme A biosynthesis; CoA from (R)-pantothenate: step 4/5. In terms of biological role, reversibly transfers an adenylyl group from ATP to 4'-phosphopantetheine, yielding dephospho-CoA (dPCoA) and pyrophosphate. The chain is Phosphopantetheine adenylyltransferase from Lactobacillus gasseri (strain ATCC 33323 / DSM 20243 / BCRC 14619 / CIP 102991 / JCM 1131 / KCTC 3163 / NCIMB 11718 / NCTC 13722 / AM63).